A 72-amino-acid chain; its full sequence is SRY-related protein ADW4 (72 aa).

Positions 1-69 form a DNA-binding region, HMG box; the sequence is VKRPMNAFMV…KHMADYPNYK (69 aa).

The protein localises to the nucleus. This is SRY-related protein ADW4 from Alligator mississippiensis (American alligator).